The primary structure comprises 268 residues: Nickel import ATP-binding protein NikE (268 aa).

One can recognise an ABC transporter domain in the interval 4–252 (LNVSGLSHHY…SSDAGRVLQN (249 aa)). 45-52 (GRSGCGKS) serves as a coordination point for ATP.

Belongs to the ABC transporter superfamily. Nickel importer (TC 3.A.1.5.3) family. In terms of assembly, the complex is composed of two ATP-binding proteins (NikD and NikE), two transmembrane proteins (NikB and NikC) and a solute-binding protein (NikA).

The protein localises to the cell inner membrane. The catalysed reaction is Ni(2+)(out) + ATP + H2O = Ni(2+)(in) + ADP + phosphate + H(+). Part of the ABC transporter complex NikABCDE involved in nickel import. Responsible for energy coupling to the transport system. This Shigella sonnei (strain Ss046) protein is Nickel import ATP-binding protein NikE.